The sequence spans 209 residues: Octanoyltransferase (209 aa).

Residues aspartate 30–lysine 209 enclose the BPL/LPL catalytic domain. Residues arginine 69–histidine 76, alanine 143–glycine 145, and glycine 156–alanine 158 each bind substrate. Cysteine 174 acts as the Acyl-thioester intermediate in catalysis.

The protein belongs to the LipB family.

The protein resides in the cytoplasm. It catalyses the reaction octanoyl-[ACP] + L-lysyl-[protein] = N(6)-octanoyl-L-lysyl-[protein] + holo-[ACP] + H(+). It participates in protein modification; protein lipoylation via endogenous pathway; protein N(6)-(lipoyl)lysine from octanoyl-[acyl-carrier-protein]: step 1/2. Functionally, catalyzes the transfer of endogenously produced octanoic acid from octanoyl-acyl-carrier-protein onto the lipoyl domains of lipoate-dependent enzymes. Lipoyl-ACP can also act as a substrate although octanoyl-ACP is likely to be the physiological substrate. This is Octanoyltransferase from Rickettsia conorii (strain ATCC VR-613 / Malish 7).